The sequence spans 127 residues: Transthyretin (127 aa).

Position 10 is a sulfocysteine (cysteine 10). Lysine 15 lines the L-thyroxine pocket. Residue glutamate 42 is modified to 4-carboxyglutamate. Glutamate 54 provides a ligand contact to L-thyroxine. N-linked (GlcNAc...) asparagine glycosylation occurs at asparagine 98. Serine 117 provides a ligand contact to L-thyroxine.

Belongs to the transthyretin family. Homotetramer. Dimer of dimers. In the homotetramer, subunits assemble around a central channel that can accommodate two ligand molecules. Interacts with RBP4. In terms of processing, sulfonation of the reactive cysteine Cys-10 enhances the stability of the native conformation of TTR, avoiding misassembly of the protein leading to amyloid formation. In terms of tissue distribution, detected in serum (at protein level).

Its subcellular location is the secreted. Functionally, thyroid hormone-binding protein. Probably transports thyroxine from the bloodstream to the brain. The sequence is that of Transthyretin (TTR) from Oryctolagus cuniculus (Rabbit).